The sequence spans 700 residues: Methionine--tRNA ligase (700 aa).

A 'HIGH' region motif is present at residues 14-24; that stretch reads PYANGPVHLGH. Zn(2+) contacts are provided by Cys-146, Cys-149, Cys-159, and Cys-162. The 'KMSKS' region signature appears at 344–348; that stretch reads KFSKS. Residue Lys-347 coordinates ATP. The tRNA-binding domain occupies 599–700; the sequence is DFLKVDLRVA…GEEINGRQIQ (102 aa).

Belongs to the class-I aminoacyl-tRNA synthetase family. MetG type 1 subfamily. Homodimer. The cofactor is Zn(2+).

The protein resides in the cytoplasm. The enzyme catalyses tRNA(Met) + L-methionine + ATP = L-methionyl-tRNA(Met) + AMP + diphosphate. Is required not only for elongation of protein synthesis but also for the initiation of all mRNA translation through initiator tRNA(fMet) aminoacylation. This Pelodictyon phaeoclathratiforme (strain DSM 5477 / BU-1) protein is Methionine--tRNA ligase.